We begin with the raw amino-acid sequence, 313 residues long: Ribosomal RNA small subunit methyltransferase H (313 aa).

S-adenosyl-L-methionine is bound by residues 35 to 37 (GGH), aspartate 55, phenylalanine 79, aspartate 100, and glutamine 107.

Belongs to the methyltransferase superfamily. RsmH family.

The protein resides in the cytoplasm. It carries out the reaction cytidine(1402) in 16S rRNA + S-adenosyl-L-methionine = N(4)-methylcytidine(1402) in 16S rRNA + S-adenosyl-L-homocysteine + H(+). Functionally, specifically methylates the N4 position of cytidine in position 1402 (C1402) of 16S rRNA. In Burkholderia thailandensis (strain ATCC 700388 / DSM 13276 / CCUG 48851 / CIP 106301 / E264), this protein is Ribosomal RNA small subunit methyltransferase H.